Consider the following 446-residue polypeptide: Histidinol dehydrogenase homolog (446 aa).

Residue His266 coordinates Zn(2+). Active-site proton acceptor residues include Glu334 and His335. His427 provides a ligand contact to Zn(2+).

This sequence belongs to the histidinol dehydrogenase family. The cofactor is Zn(2+).

This is Histidinol dehydrogenase homolog from Colwellia psychrerythraea (strain 34H / ATCC BAA-681) (Vibrio psychroerythus).